The chain runs to 122 residues: Small ribosomal subunit protein uS13 (122 aa).

The segment at 98 to 122 (VRGQRTHTNARTRKGPAKAIAGKKK) is disordered.

Belongs to the universal ribosomal protein uS13 family. As to quaternary structure, part of the 30S ribosomal subunit. Forms a loose heterodimer with protein S19. Forms two bridges to the 50S subunit in the 70S ribosome.

Functionally, located at the top of the head of the 30S subunit, it contacts several helices of the 16S rRNA. In the 70S ribosome it contacts the 23S rRNA (bridge B1a) and protein L5 of the 50S subunit (bridge B1b), connecting the 2 subunits; these bridges are implicated in subunit movement. Contacts the tRNAs in the A and P-sites. The protein is Small ribosomal subunit protein uS13 of Roseobacter denitrificans (strain ATCC 33942 / OCh 114) (Erythrobacter sp. (strain OCh 114)).